Consider the following 500-residue polypeptide: Probable cytosol aminopeptidase (500 aa).

Mn(2+)-binding residues include lysine 265 and aspartate 270. Lysine 277 is an active-site residue. Residues aspartate 288, aspartate 347, and glutamate 349 each coordinate Mn(2+). Residue arginine 351 is part of the active site.

The protein belongs to the peptidase M17 family. Requires Mn(2+) as cofactor.

The protein resides in the cytoplasm. It carries out the reaction Release of an N-terminal amino acid, Xaa-|-Yaa-, in which Xaa is preferably Leu, but may be other amino acids including Pro although not Arg or Lys, and Yaa may be Pro. Amino acid amides and methyl esters are also readily hydrolyzed, but rates on arylamides are exceedingly low.. It catalyses the reaction Release of an N-terminal amino acid, preferentially leucine, but not glutamic or aspartic acids.. In terms of biological role, presumably involved in the processing and regular turnover of intracellular proteins. Catalyzes the removal of unsubstituted N-terminal amino acids from various peptides. This is Probable cytosol aminopeptidase from Corynebacterium glutamicum (strain ATCC 13032 / DSM 20300 / JCM 1318 / BCRC 11384 / CCUG 27702 / LMG 3730 / NBRC 12168 / NCIMB 10025 / NRRL B-2784 / 534).